We begin with the raw amino-acid sequence, 505 residues long: E3 SUMO-protein ligase PIAS4-A (505 aa).

Residues 12-46 (VKSFRVSDLQTLLASMGRSKSGLKQDLVGRALRLV) enclose the SAP domain. Residues 20–24 (LQTLL) carry the LXXLL motif motif. Residue Lys35 forms a Glycyl lysine isopeptide (Lys-Gly) (interchain with G-Cter in SUMO); alternate linkage. Lys35 is covalently cross-linked (Glycyl lysine isopeptide (Lys-Gly) (interchain with G-Cter in SUMO2); alternate). Glycyl lysine isopeptide (Lys-Gly) (interchain with G-Cter in SUMO2) cross-links involve residues Lys56 and Lys68. Residues 104 to 264 (GIPKPAPPPA…SVAVYLVRVF (161 aa)) enclose the PINIT domain. An SP-RING-type zinc finger spans residues 296–381 (PESEIATTGL…LKETPEDVEE (86 aa)). Cys327, His329, Cys350, and Cys353 together coordinate Zn(2+). The interval 374–505 (ETPEDVEEIE…DYDKDLVTAY (132 aa)) is required for nuclear localization. Residues 395 to 407 (DDKEKERERENSR) are compositionally biased toward basic and acidic residues. Residues 395–505 (DDKEKERERE…DYDKDLVTAY (111 aa)) form a disordered region. Residues 437 to 457 (SGSGGASAGTGSTSGGSGGGT) show a composition bias toward gly residues. Acidic residues predominate over residues 462–485 (TLDDSSEEEGGGGAEDSEETDDSQ). Residues 493–505 (GRYDYDKDLVTAY) are compositionally biased toward basic and acidic residues.

This sequence belongs to the PIAS family. Post-translationally, sumoylated. Lys-35 is the main site of sumoylation. In terms of tissue distribution, highly expressed in spleen, liver, and brain. Expressed at lower levels in heart, intestine, kidney, gill, skin, and muscle.

The protein localises to the nucleus. It carries out the reaction S-ubiquitinyl-[E2 ubiquitin-conjugating enzyme]-L-cysteine + [acceptor protein]-L-lysine = [E2 ubiquitin-conjugating enzyme]-L-cysteine + N(6)-ubiquitinyl-[acceptor protein]-L-lysine.. It participates in protein modification; protein sumoylation. Functionally, functions as an E3-type small ubiquitin-like modifier (SUMO) ligase. May play a role as a transcriptional coregulator in various cellular pathways. Catalyzes conjugation of SUMO2 to KAT5 in response to DNA damage, facilitating repair of DNA double-strand breaks (DSBs) via homologous recombination (HR). Mediates sumoylation of PARP1 in response to PARP1 trapping to chromatin. Negatively regulates induction of interferon phi 1 (ifnphi1) mediated by mavs and ticam1/trif. Also inhibits ifnphi1-mediated activation of the interferon-stimulated genes (ISGs) pkz and cd40, and to a lesser extent rsad2 and isg15. May inhibit ticam1/trif-mediated activation of NF-kappa-B. The sequence is that of E3 SUMO-protein ligase PIAS4-A from Danio rerio (Zebrafish).